We begin with the raw amino-acid sequence, 271 residues long: 5-amino-6-(5-phospho-D-ribitylamino)uracil phosphatase YbjI (271 aa).

D9 acts as the Nucleophile in catalysis. D9 is a binding site for Mg(2+). M10 is a phosphate binding site. D11 contacts Mg(2+). Phosphate contacts are provided by residues 44–45 (SG) and K192. D215 contacts Mg(2+). N218 contacts phosphate.

Belongs to the HAD-like hydrolase superfamily. Cof family. Mg(2+) is required as a cofactor. The cofactor is Mn(2+). Co(2+) serves as cofactor. Requires Zn(2+) as cofactor.

The catalysed reaction is 5-amino-6-(5-phospho-D-ribitylamino)uracil + H2O = 5-amino-6-(D-ribitylamino)uracil + phosphate. It functions in the pathway cofactor biosynthesis; riboflavin biosynthesis; 5-amino-6-(D-ribitylamino)uracil from GTP: step 4/4. Functionally, catalyzes the dephosphorylation of 5-amino-6-(5-phospho-D-ribitylamino)uracil, and thus could be involved in the riboflavin biosynthesis pathway. Is also able to dephosphorylate flavin mononucleotide (FMN), erythrose 4-phosphate and other phosphoric acid esters. In Escherichia coli (strain K12), this protein is 5-amino-6-(5-phospho-D-ribitylamino)uracil phosphatase YbjI (ybjI).